Here is a 110-residue protein sequence, read N- to C-terminus: Large ribosomal subunit protein uL22 (110 aa).

It belongs to the universal ribosomal protein uL22 family. Part of the 50S ribosomal subunit.

Its function is as follows. This protein binds specifically to 23S rRNA; its binding is stimulated by other ribosomal proteins, e.g. L4, L17, and L20. It is important during the early stages of 50S assembly. It makes multiple contacts with different domains of the 23S rRNA in the assembled 50S subunit and ribosome. In terms of biological role, the globular domain of the protein is located near the polypeptide exit tunnel on the outside of the subunit, while an extended beta-hairpin is found that lines the wall of the exit tunnel in the center of the 70S ribosome. The sequence is that of Large ribosomal subunit protein uL22 from Salmonella arizonae (strain ATCC BAA-731 / CDC346-86 / RSK2980).